Consider the following 1154-residue polypeptide: MEADWNELLRIPLPPPNPHGLPTVATTIAFDDVSELLWAGNEYGRITSFYGPELQRYTSVRAHPVAEGPVRQILFHERGVISISSRSVHMITRRGLTQWHITHDEITDLRCMSFTAQTNKIIVAGCQKAMFTIDIDKGTIVDKLRTEHNYVLMKRSRYLCAATDTGSVNALSLTDFSVVKSWKAHGAAVNDMDARGDLLVTCGFSIRQTGSPIVDPLANVYDLKTLSPLPPIPFHAGAAYVRMHPKLQTTSFVASQSGQLQVVDLMNPNAFKLRQATVSFMLGIEISPSGEALAINDAECFIQLWGSPAKIHFNEMSKEVEFADVTPRPPQVDWSPEIPLNVIGMPYYHERLLSAWPSHLLFEVGSPPAPIDPSIVPYLRSGEMGQYAANPKKTRRYQVENTRALASTEPTLIAPKFLSEKAREQSKKADDPVGDTAASLAGARISGESEDDPLLKYSNVEIKYSRFGVDDFDFRFYNQTCFSGLETHIANSFTNSLLQLLKFIPLIRNIALHHAATSCIAESCLLCEMGYLFDMLEKANGQNCQATNLLKTFSSFREASNLGLLEENLTNKSLSSAIQAVNRFFLGQIAQDYRRIAPNSEELDMRLATIASESIRCMFCQNEIVRPGNTLVNELMYPAIDMKQARRNHTLRFSNILRASIEREAQNRGWCHICRRYQQSVMRKTAHRMPHVLMLNAAINSPACRRLWTIPGWLPEEIGIVLEGGQVLCFEGEDLRMRIQGQMPGLIIYDLVGLVAEINIPEHQKAHLVSFINVSVSSRERETRSKWHLFNDFLVTEVDKEEALRFNQSWKSPCVLAFQVRDARHMVDDTWKNFLDTTLLFRDWSLNNGRPVESRVMLSDEEKPTPGTPVALDTEFVDLEKAEINVKADGSQEIVRPSKSGLARVSVLRGSGEREGVPFIDDYISVKEPIVDYVTQYSGIKPGDLDPRTSPHNIVPLKVAYKKLWLLLNLGCVFVGHGLASDFRKVNIQVPKKQTVDTQYLFFHPSKNRRLSLRYLAWAVFKEYIQEEPADSNQGHDSIEDARMALRLWKKFQEYEDAGIVGQILEEIFREGSKLGFRPPPRNGVTTVLSRPGTAVTMQNNSGRNTPSTPDVGAAASAPTTPRQAFRRSIALTPSNGTFSGPGSGEFFTGSPLK.

WD repeat units lie at residues 20-59 (GLPT…RYTS), 102-145 (THDE…DKLR), and 276-315 (ATVS…HFNE). The linker stretch occupies residues 316–451 (MSKEVEFADV…GARISGESED (136 aa)). The USP domain maps to 452-821 (DPLLKYSNVE…SPCVLAFQVR (370 aa)). The Exonuclease domain occupies 870–1048 (VALDTEFVDL…IEDARMALRL (179 aa)). The a divalent metal cation site is built by aspartate 873, glutamate 875, aspartate 982, and aspartate 1041. The interval 1092-1154 (PGTAVTMQNN…GEFFTGSPLK (63 aa)) is disordered. 2 stretches are compositionally biased toward polar residues: residues 1096-1109 (VTMQ…TPST) and 1132-1141 (LTPSNGTFSG).

The protein belongs to the peptidase C19 family. PAN2 subfamily. Forms a heterotrimer with an asymmetric homodimer of the regulatory subunit pan3 to form the poly(A)-nuclease (PAN) deadenylation complex. It depends on a divalent metal cation as a cofactor.

It is found in the cytoplasm. The catalysed reaction is Exonucleolytic cleavage of poly(A) to 5'-AMP.. Positively regulated by the regulatory subunit pan3. Its function is as follows. Catalytic subunit of the poly(A)-nuclease (PAN) deadenylation complex, one of two cytoplasmic mRNA deadenylases involved in mRNA turnover. PAN specifically shortens poly(A) tails of RNA and the activity is stimulated by poly(A)-binding protein pab1. PAN deadenylation is followed by rapid degradation of the shortened mRNA tails by the CCR4-NOT complex. Deadenylated mRNAs are then degraded by two alternative mechanisms, namely exosome-mediated 3'-5' exonucleolytic degradation, or deadenylation-dependent mRNA decaping and subsequent 5'-3' exonucleolytic degradation by xrn1. May also be involved in post-transcriptional maturation of mRNA poly(A) tails. The protein is PAN2-PAN3 deadenylation complex catalytic subunit pan2 of Emericella nidulans (strain FGSC A4 / ATCC 38163 / CBS 112.46 / NRRL 194 / M139) (Aspergillus nidulans).